The sequence spans 39 residues: MLNIQPTQSIVNNQPKSDQKKQKPADLLKEFYDKTGNRN.

Polar residues predominate over residues methionine 1–lysine 16. A disordered region spans residues methionine 1–asparagine 39. A compositionally biased stretch (basic and acidic residues) spans serine 17–asparagine 39.

This is an uncharacterized protein from Dictyostelium discoideum (Social amoeba).